The primary structure comprises 315 residues: NAD-dependent protein deacylase sirtuin-5, mitochondrial (315 aa).

The transit peptide at 1-39 directs the protein to the mitochondrion; the sequence is MSLLHFATRRLILQVLRELGLKAPPVHKTLKICIAMSRP. Residues 40–312 enclose the Deacetylase sirtuin-type domain; sequence SSNMADFRRF…PEALSPHESE (273 aa). 61-80 is an NAD(+) binding site; sequence GAGVSAESGVPTFRGPGGFW. Tyrosine 105 and arginine 108 together coordinate substrate. Residue 143 to 146 participates in NAD(+) binding; it reads QNID. Histidine 161 acts as the Proton acceptor in catalysis. NAD(+) is bound by residues 254 to 256, 280 to 282, and cysteine 298; these read GTS and NTV.

It belongs to the sirtuin family. Class III subfamily. As to quaternary structure, monomer. Homodimer. Interacts with CPS1.

It is found in the mitochondrion. Its subcellular location is the cytoplasm. It localises to the cytosol. The protein resides in the nucleus. The enzyme catalyses N(6)-malonyl-L-lysyl-[protein] + NAD(+) + H2O = 2''-O-malonyl-ADP-D-ribose + nicotinamide + L-lysyl-[protein]. It carries out the reaction N(6)-succinyl-L-lysyl-[protein] + NAD(+) + H2O = 2''-O-succinyl-ADP-D-ribose + nicotinamide + L-lysyl-[protein]. It catalyses the reaction N(6)-glutaryl-L-lysyl-[protein] + NAD(+) + H2O = 2''-O-glutaryl-ADP-D-ribose + nicotinamide + L-lysyl-[protein]. In terms of biological role, NAD-dependent lysine demalonylase, desuccinylase and deglutarylase that specifically removes malonyl, succinyl and glutaryl groups on target proteins. Activates CPS1 and contributes to the regulation of blood ammonia levels during prolonged fasting: acts by mediating desuccinylation and deglutarylation of CPS1, thereby increasing CPS1 activity in response to elevated NAD levels during fasting. Activates SOD1 by mediating its desuccinylation, leading to reduced reactive oxygen species. Activates SHMT2 by mediating its desuccinylation. Modulates ketogenesis through the desuccinylation and activation of HMGCS2. Has weak NAD-dependent protein deacetylase activity; however this activity may not be physiologically relevant in vivo. Can deacetylate cytochrome c (CYCS) and a number of other proteins in vitro such as UOX. This is NAD-dependent protein deacylase sirtuin-5, mitochondrial from Monodelphis domestica (Gray short-tailed opossum).